We begin with the raw amino-acid sequence, 279 residues long: ATP synthase gamma chain (279 aa).

It belongs to the ATPase gamma chain family. As to quaternary structure, F-type ATPases have 2 components, CF(1) - the catalytic core - and CF(0) - the membrane proton channel. CF(1) has five subunits: alpha(3), beta(3), gamma(1), delta(1), epsilon(1). CF(0) has three main subunits: a, b and c.

It is found in the cell membrane. Functionally, produces ATP from ADP in the presence of a proton gradient across the membrane. The gamma chain is believed to be important in regulating ATPase activity and the flow of protons through the CF(0) complex. The sequence is that of ATP synthase gamma chain from Mycoplasmopsis pulmonis (strain UAB CTIP) (Mycoplasma pulmonis).